Reading from the N-terminus, the 547-residue chain is Chaperonin GroEL (547 aa).

ATP-binding positions include 30-33 (TLGP), K51, 87-91 (DGTTT), G415, and D496.

The protein belongs to the chaperonin (HSP60) family. In terms of assembly, forms a cylinder of 14 subunits composed of two heptameric rings stacked back-to-back. Interacts with the co-chaperonin GroES.

The protein resides in the cytoplasm. The enzyme catalyses ATP + H2O + a folded polypeptide = ADP + phosphate + an unfolded polypeptide.. Functionally, together with its co-chaperonin GroES, plays an essential role in assisting protein folding. The GroEL-GroES system forms a nano-cage that allows encapsulation of the non-native substrate proteins and provides a physical environment optimized to promote and accelerate protein folding. This Chlorobium limicola (strain DSM 245 / NBRC 103803 / 6330) protein is Chaperonin GroEL.